The following is a 134-amino-acid chain: Translation initiation factor 2 subunit beta (134 aa).

It belongs to the eIF-2-beta/eIF-5 family. As to quaternary structure, heterotrimer composed of an alpha, a beta and a gamma chain.

EIF-2 functions in the early steps of protein synthesis by forming a ternary complex with GTP and initiator tRNA. The sequence is that of Translation initiation factor 2 subunit beta from Pyrobaculum aerophilum (strain ATCC 51768 / DSM 7523 / JCM 9630 / CIP 104966 / NBRC 100827 / IM2).